Here is a 384-residue protein sequence, read N- to C-terminus: A-type ATP synthase subunit C (384 aa).

The protein belongs to the V-ATPase V0D/AC39 subunit family. Has multiple subunits with at least A(3), B(3), C, D, E, F, H, I and proteolipid K(x).

It is found in the cell membrane. Its function is as follows. Component of the A-type ATP synthase that produces ATP from ADP in the presence of a proton gradient across the membrane. The chain is A-type ATP synthase subunit C from Methanobrevibacter smithii (strain ATCC 35061 / DSM 861 / OCM 144 / PS).